We begin with the raw amino-acid sequence, 316 residues long: MKIIFAGTPVFAAKALEAVQKSGFDILLVLTQPDRPAGRGMKLQASPVKILAQQYNIPLLQPETLKSPDIQTQLETLKPDVMIVAAYGLILPEAVLRIPRHGCINIHASLLPRWRGAAPIQRALLEGDAETGISIMQMDQGLDTGAVLLKRAFLIEPHDTAATLHDKLADLGGKCIVETLTLLDQDKLTPTLQDNASACYAAKIRKSEAEIDWTRDSTHIDRMIRTFNPYPGAFTSLHGSMIKLWQANIINRSDTRQAGEIIAADHNGIIVACGRDALSINILQKAGGKKLTAAQFLAGHPLQPGEHFQKTTQGHL.

109–112 is a (6S)-5,6,7,8-tetrahydrofolate binding site; that stretch reads SLLP.

Belongs to the Fmt family.

The enzyme catalyses L-methionyl-tRNA(fMet) + (6R)-10-formyltetrahydrofolate = N-formyl-L-methionyl-tRNA(fMet) + (6S)-5,6,7,8-tetrahydrofolate + H(+). Its function is as follows. Attaches a formyl group to the free amino group of methionyl-tRNA(fMet). The formyl group appears to play a dual role in the initiator identity of N-formylmethionyl-tRNA by promoting its recognition by IF2 and preventing the misappropriation of this tRNA by the elongation apparatus. The polypeptide is Methionyl-tRNA formyltransferase (Nitrosomonas eutropha (strain DSM 101675 / C91 / Nm57)).